We begin with the raw amino-acid sequence, 508 residues long: CUGBP Elav-like family member 2 (508 aa).

2 necessary for RNA-binding, TNNT2 exon 5 and NMDA R1 exon 21 inclusion regions span residues Met-1–Leu-283 and Leu-357–Tyr-508. RRM domains lie at Ile-40–Ser-123, Arg-132–Thr-212, and Ala-423–Ser-501.

The protein belongs to the CELF/BRUNOL family. Interacts with A1CF. As to expression, expressed in frontal cortex. Isoform 1 is expressed in brain and lung. Isoform 2 is expressed in heart, brain, placenta, lung, liver, kidney, skeletal muscle and pancreas. Isoform 4 is expressed in heart, lung, skeletal muscle, kidney and pancreas.

Its subcellular location is the nucleus. The protein resides in the cytoplasm. In terms of biological role, RNA-binding protein implicated in the regulation of several post-transcriptional events. Involved in pre-mRNA alternative splicing, mRNA translation and stability. Mediates exon inclusion and/or exclusion in pre-mRNA that are subject to tissue-specific and developmentally regulated alternative splicing. Specifically activates exon 5 inclusion of TNNT2 in embryonic, but not adult, skeletal muscle. Activates TNNT2 exon 5 inclusion by antagonizing the repressive effect of PTB. Acts both as an activator and as a repressor of a pair of coregulated exons: promotes inclusion of the smooth muscle (SM) exon but exclusion of the non-muscle (NM) exon in actinin pre-mRNAs. Promotes inclusion of exonS 21 and exclusion of exon 5 of the NMDA receptor R1 pre-mRNA. Involved in the apoB RNA editing activity. Increases COX2 mRNA stability and inhibits COX2 mRNA translation in epithelial cells after radiation injury. Modulates the cellular apoptosis program by regulating COX2-mediated prostaglandin E2 (PGE2) expression. Binds to (CUG)n triplet repeats in the 3'-UTR of transcripts such as DMPK. Binds to the muscle-specific splicing enhancer (MSE) intronic sites flanking the TNNT2 alternative exon 5. Binds preferentially to UG-rich sequences, in particular UG repeat and UGUU motifs. Binds to apoB mRNA, specifically to AU-rich sequences located immediately upstream of the edited cytidine. Binds AU-rich sequences in the 3'-UTR of COX2 mRNA. Binds to an intronic RNA element responsible for the silencing of exon 21 splicing. Binds to (CUG)n repeats. May be a specific regulator of miRNA biogenesis. Binds to primary microRNA pri-MIR140 and, with CELF1, negatively regulates the processing to mature miRNA. This Homo sapiens (Human) protein is CUGBP Elav-like family member 2 (CELF2).